Consider the following 365-residue polypeptide: Elongation factor Tu (365 aa).

Residues 1–7, 62–66, and 117–120 each bind GTP; these read HVDHGKT, DCPGH, and NKCD. The 185-residue stretch at 1–185 folds into the tr-type G domain; that stretch reads HVDHGKTTLT…ILDTYIPEPK (185 aa). Position 7 (Thr-7) interacts with Mg(2+).

It belongs to the TRAFAC class translation factor GTPase superfamily. Classic translation factor GTPase family. EF-Tu/EF-1A subfamily. As to quaternary structure, monomer.

The protein localises to the cytoplasm. It carries out the reaction GTP + H2O = GDP + phosphate + H(+). Its function is as follows. GTP hydrolase that promotes the GTP-dependent binding of aminoacyl-tRNA to the A-site of ribosomes during protein biosynthesis. This is Elongation factor Tu from Buchnera aphidicola subsp. Melaphis rhois.